A 403-amino-acid chain; its full sequence is Enoyl-[acyl-carrier-protein] reductase [NADH] (403 aa).

NAD(+) contacts are provided by residues 49 to 54, 75 to 76, 112 to 113, and 141 to 142; these read GASSGY, FE, DA, and LA. Residue tyrosine 227 participates in substrate binding. Catalysis depends on tyrosine 237, which acts as the Proton donor. Residues lysine 246 and 276 to 278 each bind NAD(+); that span reads VVT.

Belongs to the TER reductase family. As to quaternary structure, monomer.

The enzyme catalyses a 2,3-saturated acyl-[ACP] + NAD(+) = a (2E)-enoyl-[ACP] + NADH + H(+). It functions in the pathway lipid metabolism; fatty acid biosynthesis. Involved in the final reduction of the elongation cycle of fatty acid synthesis (FAS II). Catalyzes the reduction of a carbon-carbon double bond in an enoyl moiety that is covalently linked to an acyl carrier protein (ACP). The polypeptide is Enoyl-[acyl-carrier-protein] reductase [NADH] (Pseudomonas putida (strain ATCC 47054 / DSM 6125 / CFBP 8728 / NCIMB 11950 / KT2440)).